We begin with the raw amino-acid sequence, 181 residues long: Ferredoxin C 2, chloroplastic (181 aa).

The transit peptide at 1–44 (MALILPCTFCTSLQKKNFPINRRYITNFRRGATTATCEFRIPVE) directs the protein to the chloroplast. In terms of domain architecture, 2Fe-2S ferredoxin-type spans 59-151 (HKVTVHDRQR…DLEVETQDED (93 aa)). The [2Fe-2S] cluster site is built by Cys-97, Cys-102, Cys-105, and Cys-135.

The protein belongs to the 2Fe2S plant-type ferredoxin family. [2Fe-2S] cluster is required as a cofactor.

The protein resides in the plastid. It localises to the chloroplast. Its function is as follows. Ferredoxins are iron-sulfur proteins that transfer electrons in a wide variety of metabolic reactions. Mediates alternative electron partitioning in conditions of acceptor limitation at photosystem I. The protein is Ferredoxin C 2, chloroplastic of Arabidopsis thaliana (Mouse-ear cress).